The sequence spans 480 residues: MDEAKEENRRLKSSLSKIKKDFDILQTQYNQLMAKHNEPTKFQSKGHHQDKGEDEDREKVNEREELVSLSLGRRLNSEVPSGSNKEEKNKDVEEAEGDRNYDDNEKSSIQGLSMGIEYKALSNPNEKLEIDHNQETMSLEISNNNKIRSQNSFGFKNDGDDHEDEDEILPQNLVKKTRVSVRSRCETPTMNDGCQWRKYGQKIAKGNPCPRAYYRCTIAASCPVRKQVQRCSEDMSILISTYEGTHNHPLPMSATAMASATSAAASMLLSGASSSSSAAADLHGLNFSLSGNNITPKPKTHFLQSPSSSGHPTVTLDLTTSSSSQQPFLSMLNRFSSPPSNVSRSNSYPSTNLNFSNNTNTLMNWGGGGNPSDQYRAAYGNINTHQQSPYHKIIQTRTAGSSFDPFGRSSSSHSPQINLDHIGIKNIISHQVPSLPAETIKAITTDPSFQSALATALSSIMGGDLKIDHNVTRNEAEKSP.

The interval 30–108 is disordered; the sequence is NQLMAKHNEP…RNYDDNEKSS (79 aa). Basic and acidic residues-rich tracts occupy residues 57–66 and 84–106; these read REKVNEREEL and NKEE…DNEK. A DNA-binding region (WRKY) is located at residues 185–251; that stretch reads CETPTMNDGC…YEGTHNHPLP (67 aa).

The protein resides in the nucleus. In terms of biological role, transcription factor. Interacts specifically with the W box (5'-(T)TGAC[CT]-3'), a frequently occurring elicitor-responsive cis-acting element. The protein is Probable WRKY transcription factor 61 (WRKY61) of Arabidopsis thaliana (Mouse-ear cress).